The following is a 135-amino-acid chain: Putative nickel-responsive regulator (135 aa).

Residues His79, His90, His92, and Cys98 each contribute to the Ni(2+) site.

Belongs to the transcriptional regulatory CopG/NikR family. The cofactor is Ni(2+).

Its function is as follows. Transcriptional regulator. The polypeptide is Putative nickel-responsive regulator (Dictyoglomus thermophilum (strain ATCC 35947 / DSM 3960 / H-6-12)).